A 444-amino-acid chain; its full sequence is Trigger factor (444 aa).

Positions 166 to 251 (GDQVVIDFKG…VKAVKAPKAA (86 aa)) constitute a PPIase FKBP-type domain.

Belongs to the FKBP-type PPIase family. Tig subfamily.

Its subcellular location is the cytoplasm. It catalyses the reaction [protein]-peptidylproline (omega=180) = [protein]-peptidylproline (omega=0). Involved in protein export. Acts as a chaperone by maintaining the newly synthesized protein in an open conformation. Functions as a peptidyl-prolyl cis-trans isomerase. This chain is Trigger factor, found in Cereibacter sphaeroides (strain KD131 / KCTC 12085) (Rhodobacter sphaeroides).